A 413-amino-acid chain; its full sequence is S-adenosylmethionine synthase (413 aa).

His-15 contributes to the ATP binding site. Mg(2+) is bound at residue Asp-17. Glu-43 contributes to the K(+) binding site. L-methionine-binding residues include Glu-56 and Gln-100. The segment at 100 to 110 (QSPDISQGVNE) is flexible loop. ATP-binding positions include 171–173 (DGK), 248–249 (KF), Asp-257, 263–264 (RK), Ala-280, and Lys-284. L-methionine is bound at residue Asp-257. Position 288 (Lys-288) interacts with L-methionine.

This sequence belongs to the AdoMet synthase family. Homotetramer; dimer of dimers. It depends on Mg(2+) as a cofactor. K(+) is required as a cofactor.

The protein localises to the cytoplasm. The catalysed reaction is L-methionine + ATP + H2O = S-adenosyl-L-methionine + phosphate + diphosphate. It participates in amino-acid biosynthesis; S-adenosyl-L-methionine biosynthesis; S-adenosyl-L-methionine from L-methionine: step 1/1. In terms of biological role, catalyzes the formation of S-adenosylmethionine (AdoMet) from methionine and ATP. The overall synthetic reaction is composed of two sequential steps, AdoMet formation and the subsequent tripolyphosphate hydrolysis which occurs prior to release of AdoMet from the enzyme. This chain is S-adenosylmethionine synthase, found in Prochlorococcus marinus subsp. pastoris (strain CCMP1986 / NIES-2087 / MED4).